The primary structure comprises 349 residues: 5-deoxyribose 1-phosphate isomerase (349 aa).

Residues 49-51 (RGA), Arg-92, and Gln-199 contribute to the substrate site. The active-site Proton donor is the Asp-240. 250 to 251 (NK) lines the substrate pocket.

This sequence belongs to the EIF-2B alpha/beta/delta subunits family. DrdI subfamily.

It carries out the reaction 5-deoxy-alpha-D-ribose 1-phosphate = 5-deoxy-D-ribulose 1-phosphate. Its pathway is carbohydrate degradation. Catalyzes the isomerization of 5-deoxy-alpha-D-ribose 1-phosphate to 5-deoxy-D-ribulose 1-phosphate, as part of a 5-deoxyribose salvage pathway that recycles this toxic radical SAM enzyme by-product to mainstream metabolites. The sequence is that of 5-deoxyribose 1-phosphate isomerase from Clostridium botulinum (strain Loch Maree / Type A3).